The primary structure comprises 466 residues: Uronate isomerase (466 aa).

This sequence belongs to the metallo-dependent hydrolases superfamily. Uronate isomerase family.

It carries out the reaction D-glucuronate = D-fructuronate. It catalyses the reaction aldehydo-D-galacturonate = keto-D-tagaturonate. It functions in the pathway carbohydrate metabolism; pentose and glucuronate interconversion. The polypeptide is Uronate isomerase (uxaC) (Brucella melitensis biotype 1 (strain ATCC 23456 / CCUG 17765 / NCTC 10094 / 16M)).